A 123-amino-acid polypeptide reads, in one-letter code: TYMS opposite strand protein (123 aa).

The tract at residues M57–I111 is disordered. Over residues H91–L101 the composition is skewed to basic residues.

This Homo sapiens (Human) protein is TYMS opposite strand protein (TYMSOS).